A 265-amino-acid polypeptide reads, in one-letter code: ATP synthase subunit a (265 aa).

6 helical membrane passes run 26–46, 88–108, 132–152, 168–188, 195–217, and 231–251; these read VHLD…FFFY, IGSL…IDLI, DISA…FYTI, PFNH…TLLA, FRLF…MYMA, and LIWA…FMML.

This sequence belongs to the ATPase A chain family. As to quaternary structure, F-type ATPases have 2 components, CF(1) - the catalytic core - and CF(0) - the membrane proton channel. CF(1) has five subunits: alpha(3), beta(3), gamma(1), delta(1), epsilon(1). CF(0) has three main subunits: a(1), b(2) and c(9-12). The alpha and beta chains form an alternating ring which encloses part of the gamma chain. CF(1) is attached to CF(0) by a central stalk formed by the gamma and epsilon chains, while a peripheral stalk is formed by the delta and b chains.

Its subcellular location is the cell inner membrane. In terms of biological role, key component of the proton channel; it plays a direct role in the translocation of protons across the membrane. The chain is ATP synthase subunit a from Histophilus somni (strain 129Pt) (Haemophilus somnus).